The sequence spans 391 residues: NADH-quinone oxidoreductase subunit D (391 aa).

It belongs to the complex I 49 kDa subunit family. NDH-1 is composed of 14 different subunits. Subunits NuoB, C, D, E, F, and G constitute the peripheral sector of the complex.

Its subcellular location is the cell inner membrane. It carries out the reaction a quinone + NADH + 5 H(+)(in) = a quinol + NAD(+) + 4 H(+)(out). NDH-1 shuttles electrons from NADH, via FMN and iron-sulfur (Fe-S) centers, to quinones in the respiratory chain. The immediate electron acceptor for the enzyme in this species is believed to be ubiquinone. Couples the redox reaction to proton translocation (for every two electrons transferred, four hydrogen ions are translocated across the cytoplasmic membrane), and thus conserves the redox energy in a proton gradient. This chain is NADH-quinone oxidoreductase subunit D, found in Pelagibacter ubique (strain HTCC1062).